We begin with the raw amino-acid sequence, 583 residues long: Aspartate--tRNA(Asp/Asn) ligase (583 aa).

Glu171 contributes to the L-aspartate binding site. Residues 195-198 (QLFK) are aspartate. Arg217 provides a ligand contact to L-aspartate. Residues 217 to 219 (RDE) and Gln226 contribute to the ATP site. His443 is a binding site for L-aspartate. Glu476 is an ATP binding site. Arg483 contributes to the L-aspartate binding site. Residue 528–531 (GLDR) coordinates ATP.

It belongs to the class-II aminoacyl-tRNA synthetase family. Type 1 subfamily. In terms of assembly, homodimer.

The protein localises to the cytoplasm. The enzyme catalyses tRNA(Asx) + L-aspartate + ATP = L-aspartyl-tRNA(Asx) + AMP + diphosphate. Its function is as follows. Aspartyl-tRNA synthetase with relaxed tRNA specificity since it is able to aspartylate not only its cognate tRNA(Asp) but also tRNA(Asn). Reaction proceeds in two steps: L-aspartate is first activated by ATP to form Asp-AMP and then transferred to the acceptor end of tRNA(Asp/Asn). The protein is Aspartate--tRNA(Asp/Asn) ligase of Ruthia magnifica subsp. Calyptogena magnifica.